The chain runs to 388 residues: tRNA(Ile)-lysidine synthase (388 aa).

51–56 lines the ATP pocket; it reads SGGRDS.

The protein belongs to the tRNA(Ile)-lysidine synthase family.

It is found in the cytoplasm. The catalysed reaction is cytidine(34) in tRNA(Ile2) + L-lysine + ATP = lysidine(34) in tRNA(Ile2) + AMP + diphosphate + H(+). Ligates lysine onto the cytidine present at position 34 of the AUA codon-specific tRNA(Ile) that contains the anticodon CAU, in an ATP-dependent manner. Cytidine is converted to lysidine, thus changing the amino acid specificity of the tRNA from methionine to isoleucine. The polypeptide is tRNA(Ile)-lysidine synthase (Bifidobacterium longum (strain DJO10A)).